A 439-amino-acid chain; its full sequence is Xylose isomerase (439 aa).

Residues His-101 and Asp-104 contribute to the active site. 7 residues coordinate Mg(2+): Glu-232, Glu-268, His-271, Asp-296, Asp-307, Asp-309, and Asp-339.

This sequence belongs to the xylose isomerase family. Homotetramer. The cofactor is Mg(2+).

The protein localises to the cytoplasm. The catalysed reaction is alpha-D-xylose = alpha-D-xylulofuranose. This chain is Xylose isomerase, found in Haemophilus influenzae (strain 86-028NP).